Consider the following 366-residue polypeptide: D-alanine--D-alanine ligase (366 aa).

An ATP-grasp domain is found at 149 to 358 (KIAFDHAGLP…FSELVDTLIQ (210 aa)). An ATP-binding site is contributed by 185-240 (ETTLEYPCFVKPANLGSSVGIAKVRSRSELETALDNAASYDRRIIVEAGVEAKELE). 3 residues coordinate Mg(2+): D311, E325, and N327.

It belongs to the D-alanine--D-alanine ligase family. It depends on Mg(2+) as a cofactor. The cofactor is Mn(2+).

Its subcellular location is the cytoplasm. The enzyme catalyses 2 D-alanine + ATP = D-alanyl-D-alanine + ADP + phosphate + H(+). It participates in cell wall biogenesis; peptidoglycan biosynthesis. Functionally, cell wall formation. This chain is D-alanine--D-alanine ligase, found in Trichodesmium erythraeum (strain IMS101).